The sequence spans 264 residues: MSNILTKIIAWKVEEIAERLLHVSQAELVARCADLPTPRGFAGALQATIAHGDPAVIAEIKKASPSKGVLREDFRPAEIAISYELGGASCLSVLTDVHFFKGHDDYLSQARDACTLPVLRKDFTIDPYQVYEARVLGADCILLIVAALDDAQLVDLSGLALQLGMDVLVEVHDIDELERAIQISAPLIGINNRNLSTFNVSLETTLTMKGLVPRDRLLVSESGILTSADVQRLRAAGVNAFLVGEAFMRATEPGESLREMFFIT.

The protein belongs to the TrpC family.

It catalyses the reaction 1-(2-carboxyphenylamino)-1-deoxy-D-ribulose 5-phosphate + H(+) = (1S,2R)-1-C-(indol-3-yl)glycerol 3-phosphate + CO2 + H2O. It functions in the pathway amino-acid biosynthesis; L-tryptophan biosynthesis; L-tryptophan from chorismate: step 4/5. The sequence is that of Indole-3-glycerol phosphate synthase from Xylella fastidiosa (strain 9a5c).